The sequence spans 602 residues: Glutamyl-tRNA(Gln) amidotransferase subunit B, mitochondrial (602 aa).

The protein belongs to the GatB/GatE family. GatB subfamily. In terms of assembly, subunit of the heterotrimeric GatCAB amidotransferase (AdT) complex, composed of A, B and C subunits.

The protein resides in the mitochondrion. It carries out the reaction L-glutamyl-tRNA(Gln) + L-glutamine + ATP + H2O = L-glutaminyl-tRNA(Gln) + L-glutamate + ADP + phosphate + H(+). In terms of biological role, allows the formation of correctly charged Gln-tRNA(Gln) through the transamidation of misacylated Glu-tRNA(Gln) in the mitochondria. The reaction takes place in the presence of glutamine and ATP through an activated gamma-phospho-Glu-tRNA(Gln). This Paracoccidioides lutzii (strain ATCC MYA-826 / Pb01) (Paracoccidioides brasiliensis) protein is Glutamyl-tRNA(Gln) amidotransferase subunit B, mitochondrial.